The sequence spans 297 residues: Pyridoxal 5'-phosphate synthase subunit Pdx1 (297 aa).

A D-ribose 5-phosphate-binding site is contributed by aspartate 27. Lysine 84 (schiff-base intermediate with D-ribose 5-phosphate) is an active-site residue. Glycine 156 is a binding site for D-ribose 5-phosphate. Residue arginine 168 coordinates D-glyceraldehyde 3-phosphate. D-ribose 5-phosphate-binding positions include glycine 217 and 238–239 (GS).

It belongs to the PdxS/SNZ family. As to quaternary structure, homohexamer and homododecamer. In the presence of Pdx2, forms a dodecamer of heterodimers.

The catalysed reaction is aldehydo-D-ribose 5-phosphate + D-glyceraldehyde 3-phosphate + L-glutamine = pyridoxal 5'-phosphate + L-glutamate + phosphate + 3 H2O + H(+). It participates in cofactor biosynthesis; pyridoxal 5'-phosphate biosynthesis. In terms of biological role, catalyzes the formation of pyridoxal 5'-phosphate from ribose 5-phosphate (RBP), glyceraldehyde 3-phosphate (G3P) and ammonia. The ammonia is provided by Pdx2. Can also use ribulose 5-phosphate and dihydroxyacetone phosphate as substrates, resulting from enzyme-catalyzed isomerization of RBP and G3P, respectively. This chain is Pyridoxal 5'-phosphate synthase subunit Pdx1, found in Plasmodium berghei.